Consider the following 231-residue polypeptide: Beta-casein (231 aa).

The N-terminal stretch at Met1 to Ala15 is a signal peptide. A Phosphoserine modification is found at Ser24. Thr27 is subject to Phosphothreonine. 3 positions are modified to phosphoserine: Ser29, Ser31, and Ser32.

This sequence belongs to the beta-casein family. Mammary gland specific. Secreted in milk.

The protein localises to the secreted. Important role in determination of the surface properties of the casein micelles. The sequence is that of Beta-casein (Csn2) from Rattus norvegicus (Rat).